Here is a 471-residue protein sequence, read N- to C-terminus: Probable ribonuclease FAU-1 (471 aa).

The protein belongs to the FAU-1 family.

Functionally, probable RNase involved in rRNA stability through maturation and/or degradation of precursor rRNAs. Preferentially cleaves UA sequences in the 5' precursor region of 5S rRNA. Binds to RNA in loop regions with AU-rich sequences. This chain is Probable ribonuclease FAU-1, found in Thermococcus kodakarensis (strain ATCC BAA-918 / JCM 12380 / KOD1) (Pyrococcus kodakaraensis (strain KOD1)).